Consider the following 179-residue polypeptide: UPF0227 protein VS_2073 (179 aa).

Belongs to the UPF0227 family.

In Vibrio atlanticus (strain LGP32) (Vibrio splendidus (strain Mel32)), this protein is UPF0227 protein VS_2073.